A 464-amino-acid chain; its full sequence is Anthocyanidin 3-O-galactosyltransferase 3GT1 (464 aa).

Residues Ser-19 and His-21 each coordinate an anthocyanidin. Residue His-21 is the Proton acceptor of the active site. A glycan (N-linked (GlcNAc...) asparagine) is linked at Asn-38. Asp-121 (charge relay) is an active-site residue. An anthocyanidin is bound at residue His-152. The UDP-alpha-D-glucose site is built by Ala-342, Gln-344, His-359, Trp-362, Asn-363, Ser-364, and Glu-367. Gly-382 is a binding site for an anthocyanidin. Asp-383 contacts UDP-alpha-D-glucose.

This sequence belongs to the UDP-glycosyltransferase family. As to quaternary structure, monomer. In terms of tissue distribution, mostly expressed in leaves and flowers and, to a lower extent, in roots. In flowers, mainly observed in petals, toruses and scapes, and at lower levels in pistils and stamens.

It carries out the reaction cyanidin + UDP-alpha-D-galactose = cyanidin 3-O-beta-D-galactoside + UDP + H(+). The catalysed reaction is cyanidin + UDP-alpha-D-glucose = cyanidin 3-O-beta-D-glucoside + UDP + H(+). The enzyme catalyses delphinidin + UDP-alpha-D-glucose = delphinidin 3-O-beta-D-glucoside + UDP. It catalyses the reaction malvidin + UDP-alpha-D-glucose = malvidin 3-O-beta-D-glucoside + UDP. It carries out the reaction delphinidin + UDP-alpha-D-galactose = delphinidin 3-O-beta-D-galactoside + UDP + H(+). The catalysed reaction is pelargonidin + UDP-alpha-D-galactose = pelargonidin 3-O-beta-D-galactoside betaine + UDP. The enzyme catalyses peonidin + UDP-alpha-D-galactose = peonidin 3-O-beta-D-galactoside + UDP. It catalyses the reaction malvidin + UDP-alpha-D-galactose = malvidin 3-O-beta-D-galactoside + UDP + H(+). It carries out the reaction petunidin + UDP-alpha-D-galactose = petunidin 3-O-beta-D-galactoside + UDP. The catalysed reaction is an anthocyanidin + UDP-alpha-D-glucose + H(+) = an anthocyanidin 3-O-beta-D-glucoside + UDP. The enzyme catalyses an anthocyanidin + UDP-alpha-D-galactose = an anthocyanidin 3-O-beta-D-galactoside + UDP. It functions in the pathway pigment biosynthesis; anthocyanin biosynthesis. Flavonoid 3-O-glycosyltransferase involved in the biosynthesis of anthocyanins conferring flower red/pink colors, mainly anthocyanidin 3-O-glycosides. Catalyzes the addition of UDP-sugar to the 3-OH of anthocyanidin, with a preference for UDP-galactose (UDP-Gal) as sugar donor and cyanidin as substrate; able to use delphinidin, pelargonidin, peonidin, malvidin and petunidin as substrates in the presence of UDP-Gal. Can also use UDP-glucose (UDP-Glu) as sugar donor with delphinidin, cyanidin and malvidin as substrates, but not active on pelargonidin, peonidin and petunidin. The protein is Anthocyanidin 3-O-galactosyltransferase 3GT1 of Rhododendron delavayi (Rhododendron).